The chain runs to 694 residues: Probable methyltransferase PMT11 (694 aa).

The Cytoplasmic segment spans residues 1–14 (MKPLTNGDLFKSPT). Residues 15–32 (LIKISALVFVTVAFFYLG) form a helical; Signal-anchor for type II membrane protein membrane-spanning segment. The Lumenal portion of the chain corresponds to 33–694 (KHWSDDGYQQ…LTCEKRLLRA (662 aa)). N-linked (GlcNAc...) asparagine glycosylation is found at asparagine 69 and asparagine 77. The interval 83–128 (IPATIRQQPPSVVADTEKVKVEANPPPPPPPSPSPPPPPGPVKSFG) is disordered. The segment covering 106 to 123 (NPPPPPPPSPSPPPPPGP) has biased composition (pro residues). N-linked (GlcNAc...) asparagine glycosylation is found at asparagine 155, asparagine 378, and asparagine 423.

It belongs to the methyltransferase superfamily.

The protein resides in the golgi apparatus membrane. This Arabidopsis thaliana (Mouse-ear cress) protein is Probable methyltransferase PMT11.